Consider the following 344-residue polypeptide: Dihydroorotate dehydrogenase (quinone) (344 aa).

FMN contacts are provided by residues 65-69 (AGLDK) and Thr-89. Lys-69 is a binding site for substrate. 114-118 (NRMGF) is a substrate binding site. FMN is bound by residues Asn-145 and Asn-178. A substrate-binding site is contributed by Asn-178. Ser-181 acts as the Nucleophile in catalysis. Asn-183 contacts substrate. Residues Lys-223 and Thr-251 each contribute to the FMN site. A substrate-binding site is contributed by 252–253 (NT). Residues Gly-274, Gly-303, and 324–325 (YS) contribute to the FMN site.

This sequence belongs to the dihydroorotate dehydrogenase family. Type 2 subfamily. As to quaternary structure, monomer. Requires FMN as cofactor.

The protein localises to the cell membrane. The catalysed reaction is (S)-dihydroorotate + a quinone = orotate + a quinol. It functions in the pathway pyrimidine metabolism; UMP biosynthesis via de novo pathway; orotate from (S)-dihydroorotate (quinone route): step 1/1. In terms of biological role, catalyzes the conversion of dihydroorotate to orotate with quinone as electron acceptor. In Cupriavidus taiwanensis (strain DSM 17343 / BCRC 17206 / CCUG 44338 / CIP 107171 / LMG 19424 / R1) (Ralstonia taiwanensis (strain LMG 19424)), this protein is Dihydroorotate dehydrogenase (quinone).